Reading from the N-terminus, the 355-residue chain is UDP-N-acetylglucosamine--N-acetylmuramyl-(pentapeptide) pyrophosphoryl-undecaprenol N-acetylglucosamine transferase (355 aa).

Residues Thr-15–Gly-17, Asn-127, Arg-163, Ser-191, Ile-244, Ala-263–Glu-268, and Gln-288 contribute to the UDP-N-acetyl-alpha-D-glucosamine site.

This sequence belongs to the glycosyltransferase 28 family. MurG subfamily.

It is found in the cell inner membrane. It carries out the reaction di-trans,octa-cis-undecaprenyl diphospho-N-acetyl-alpha-D-muramoyl-L-alanyl-D-glutamyl-meso-2,6-diaminopimeloyl-D-alanyl-D-alanine + UDP-N-acetyl-alpha-D-glucosamine = di-trans,octa-cis-undecaprenyl diphospho-[N-acetyl-alpha-D-glucosaminyl-(1-&gt;4)]-N-acetyl-alpha-D-muramoyl-L-alanyl-D-glutamyl-meso-2,6-diaminopimeloyl-D-alanyl-D-alanine + UDP + H(+). Its pathway is cell wall biogenesis; peptidoglycan biosynthesis. In terms of biological role, cell wall formation. Catalyzes the transfer of a GlcNAc subunit on undecaprenyl-pyrophosphoryl-MurNAc-pentapeptide (lipid intermediate I) to form undecaprenyl-pyrophosphoryl-MurNAc-(pentapeptide)GlcNAc (lipid intermediate II). This Shigella flexneri serotype 5b (strain 8401) protein is UDP-N-acetylglucosamine--N-acetylmuramyl-(pentapeptide) pyrophosphoryl-undecaprenol N-acetylglucosamine transferase.